A 104-amino-acid polypeptide reads, in one-letter code: MMLKPSIDTLLDKVPSKYSLVILEAKRAHELEAGAPATQGFKSEKSTLRALEEIESGNVTIHLDPEGKREAVRRRIEEEKRRKEEEEKKIKEQIAKEKEDGEKI.

The segment at 76-104 (IEEEKRRKEEEEKKIKEQIAKEKEDGEKI) is disordered.

It belongs to the RNA polymerase subunit omega family. The RNAP catalytic core consists of 2 alpha, 1 beta, 1 beta' and 1 omega subunit. When a sigma factor is associated with the core the holoenzyme is formed, which can initiate transcription.

The catalysed reaction is RNA(n) + a ribonucleoside 5'-triphosphate = RNA(n+1) + diphosphate. Its function is as follows. Promotes RNA polymerase assembly. Latches the N- and C-terminal regions of the beta' subunit thereby facilitating its interaction with the beta and alpha subunits. The polypeptide is DNA-directed RNA polymerase subunit omega (Streptococcus pneumoniae (strain CGSP14)).